A 659-amino-acid chain; its full sequence is Threonine--tRNA ligase (659 aa).

The TGS domain occupies 1–60; it reads MTVYLPDGKPLELPEGATAKDVARALGEGWERRAVGAIVDGELYDLLKPLPQGAKVRLLT. The tract at residues 252-552 is catalytic; it reads DHRRLGRELE…LIEHFAGDFP (301 aa). Zn(2+)-binding residues include C349, H400, and H529.

This sequence belongs to the class-II aminoacyl-tRNA synthetase family. Homodimer. Zn(2+) is required as a cofactor.

It is found in the cytoplasm. It catalyses the reaction tRNA(Thr) + L-threonine + ATP = L-threonyl-tRNA(Thr) + AMP + diphosphate + H(+). Functionally, catalyzes the attachment of threonine to tRNA(Thr) in a two-step reaction: L-threonine is first activated by ATP to form Thr-AMP and then transferred to the acceptor end of tRNA(Thr). Also edits incorrectly charged L-seryl-tRNA(Thr). This Thermus thermophilus (strain ATCC BAA-163 / DSM 7039 / HB27) protein is Threonine--tRNA ligase.